The sequence spans 99 residues: Protein dpy-30 homolog (99 aa).

The residue at position 1 (M1) is an N-acetylmethionine. The segment at M1–S26 is disordered. S19 bears the Phosphoserine mark. At K35 the chain carries N6-acetyllysine; alternate. K35 participates in a covalent cross-link: Glycyl lysine isopeptide (Lys-Gly) (interchain with G-Cter in SUMO2); alternate.

The protein belongs to the dpy-30 family. As to quaternary structure, homodimer. Core component of several methyltransferase-containing complexes including MLL1/MLL, MLL2/3 (also named ASCOM complex) and MLL4/WBP7. Each complex is at least composed of ASH2L, RBBP5, WDR5, DPY30, one or more specific histone methyltransferases (KMT2A/MLL1, KMT2D/MLL2, KMT2C/MLL3 and KMT2B/MLL4), and the facultative components MEN1, HCFC1, HCFC2, NCOA6, KDM6A, PAXIP1/PTIP, PAGR1 and alpha- and beta-tubulin PAXIP1/PTIP, PAGR1 and alpha- and beta-tubulin. Interacts with ASH2L. The interaction with ASH2L is direct. Interacts with ARFGEF1. Component of the SET1 complex, at least composed of the catalytic subunit (SETD1A or SETD1B), WDR5, WDR82, RBBP5, ASH2L/ASH2, CXXC1/CFP1, HCFC1 and DPY30.

It is found in the nucleus. The protein localises to the golgi apparatus. Its subcellular location is the trans-Golgi network. Its function is as follows. As part of the MLL1/MLL complex, involved in the methylation of histone H3 at 'Lys-4', particularly trimethylation. Histone H3 'Lys-4' methylation represents a specific tag for epigenetic transcriptional activation. May play some role in histone H3 acetylation. In embryonic stem (ES) cells, plays a crucial role in the differentiation potential, particularly along the neural lineage, regulating gene induction and histone H3 'Lys-4' methylation at key developmental loci, including that mediated by retinoic acid. Does not affect ES cell self-renewal. May also play an indirect or direct role in endosomal transport. The protein is Protein dpy-30 homolog (Dpy30) of Mus musculus (Mouse).